The sequence spans 835 residues: Invasin (835 aa).

Positions 451 to 541 constitute a Big-1 domain; the sequence is VITSEVTDDG…QQATVDVRFA (91 aa).

This sequence belongs to the intimin/invasin family.

The protein localises to the cell outer membrane. Functionally, invasin is a protein that allows enteric bacteria to penetrate cultured mammalian cells. The entry of invasin in the cell is mediated by binding several beta-1 chain integrins. This is Invasin from Yersinia enterocolitica.